The primary structure comprises 312 residues: Formimidoylglutamase (312 aa).

Residues histidine 123, aspartate 152, histidine 154, aspartate 156, cysteine 243, and aspartate 245 each contribute to the Mn(2+) site.

Belongs to the arginase family. The cofactor is Mn(2+).

The enzyme catalyses N-formimidoyl-L-glutamate + H2O = formamide + L-glutamate. It functions in the pathway amino-acid degradation; L-histidine degradation into L-glutamate; L-glutamate from N-formimidoyl-L-glutamate (hydrolase route): step 1/1. Catalyzes the conversion of N-formimidoyl-L-glutamate to L-glutamate and formamide. This Pseudomonas fluorescens (strain ATCC BAA-477 / NRRL B-23932 / Pf-5) protein is Formimidoylglutamase.